A 256-amino-acid chain; its full sequence is Triosephosphate isomerase (256 aa).

10–12 (NWK) contributes to the substrate binding site. H99 functions as the Electrophile in the catalytic mechanism. The active-site Proton acceptor is E171. Substrate contacts are provided by residues G177, S216, and 237–238 (GG).

Belongs to the triosephosphate isomerase family. In terms of assembly, homodimer.

Its subcellular location is the cytoplasm. It catalyses the reaction D-glyceraldehyde 3-phosphate = dihydroxyacetone phosphate. The protein operates within carbohydrate biosynthesis; gluconeogenesis. It functions in the pathway carbohydrate degradation; glycolysis; D-glyceraldehyde 3-phosphate from glycerone phosphate: step 1/1. Involved in the gluconeogenesis. Catalyzes stereospecifically the conversion of dihydroxyacetone phosphate (DHAP) to D-glyceraldehyde-3-phosphate (G3P). In Colwellia psychrerythraea (strain 34H / ATCC BAA-681) (Vibrio psychroerythus), this protein is Triosephosphate isomerase.